Reading from the N-terminus, the 377-residue chain is Chaperone protein DnaJ (377 aa).

Residues 4–69 (DYYEVLGVSK…EKRARYDQMG (66 aa)) enclose the J domain. A CR-type zinc finger spans residues 131 to 213 (GTEKEIQVPR…CSGKGTTRKV (83 aa)). Cys-144, Cys-147, Cys-161, Cys-164, Cys-187, Cys-190, Cys-201, and Cys-204 together coordinate Zn(2+). CXXCXGXG motif repeat units follow at residues 144–151 (CTECHGSG), 161–168 (CSQCHGTG), 187–194 (CPACNGSG), and 201–208 (CKECSGKG).

This sequence belongs to the DnaJ family. In terms of assembly, homodimer. It depends on Zn(2+) as a cofactor.

Its subcellular location is the cytoplasm. Functionally, participates actively in the response to hyperosmotic and heat shock by preventing the aggregation of stress-denatured proteins and by disaggregating proteins, also in an autonomous, DnaK-independent fashion. Unfolded proteins bind initially to DnaJ; upon interaction with the DnaJ-bound protein, DnaK hydrolyzes its bound ATP, resulting in the formation of a stable complex. GrpE releases ADP from DnaK; ATP binding to DnaK triggers the release of the substrate protein, thus completing the reaction cycle. Several rounds of ATP-dependent interactions between DnaJ, DnaK and GrpE are required for fully efficient folding. Also involved, together with DnaK and GrpE, in the DNA replication of plasmids through activation of initiation proteins. In Desulfitobacterium hafniense (strain DSM 10664 / DCB-2), this protein is Chaperone protein DnaJ.